The following is a 5162-amino-acid chain: Linear gramicidin synthase subunit B (5162 aa).

Carrier domains follow at residues 963–1038 (APRN…QALR), 2027–2101 (EPQS…VVLE), 3541–3616 (APRN…GAIG), and 4601–4675 (AATS…GQST). O-(pantetheine 4'-phosphoryl)serine is present on residues S998, S2062, S3576, and S4636.

It belongs to the ATP-dependent AMP-binding enzyme family. As to quaternary structure, large multienzyme complex composed of 4 subunits; LgrA, LgrB, LgrC and LgrD. The cofactor is pantetheine 4'-phosphate.

Functionally, activates the 3rd to 6th amino acids (Ala, D-Leu, Ala and D-Val) in linear gramicidin and catalyzes the formation of the peptide bond between them. This enzyme is also responsible for the epimerization of the 4th (D-Leu) and the 6th (D-Val) amino acids. The chain is Linear gramicidin synthase subunit B (lgrB) from Brevibacillus parabrevis.